Reading from the N-terminus, the 815-residue chain is Subtilisin-like protease SBT2.5 (815 aa).

A signal peptide spans 1 to 19; the sequence is MDIGLRIFVVFVLLVAVTA. The region spanning 21-124 is the Inhibitor I9 domain; that stretch reads VYIVTMEGDP…RSVDKDWKVR (104 aa). In terms of domain architecture, Peptidase S8 spans 120-671; the sequence is DWKVRRLTTH…SGHVNPSAAL (552 aa). Residues D160 and H234 each act as charge relay system in the active site. A PA domain is found at 397-501; sequence TLVSANDVLL…VSKSMDLIDY (105 aa). 2 N-linked (GlcNAc...) asparagine glycosylation sites follow: N503 and N577. Residue S596 is the Charge relay system of the active site. N701 carries N-linked (GlcNAc...) asparagine glycosylation.

Belongs to the peptidase S8 family. Expressed in roots, leaves and flowers of mature plants.

The chain is Subtilisin-like protease SBT2.5 from Arabidopsis thaliana (Mouse-ear cress).